The primary structure comprises 402 residues: Subtilisin-like protease 9 (402 aa).

Residues 1–20 form the signal peptide; it reads MGFFRQLFSLSLCALSLAIP. Positions 21 to 120 are excised as a propeptide; the sequence is SKLIGLENTQ…VEVDRVVKLD (100 aa). The 84-residue stretch at 36–119 folds into the Inhibitor I9 domain; the sequence is SYIVVMKSTI…YVEVDRVVKL (84 aa). Residues 130–402 form the Peptidase S8 domain; the sequence is SWGLGRISHK…RKLLYNGSGA (273 aa). Residues Asp-162 and His-193 each act as charge relay system in the active site. Residue Asn-254 is glycosylated (N-linked (GlcNAc...) asparagine). Catalysis depends on Ser-348, which acts as the Charge relay system. Residues Asn-390 and Asn-398 are each glycosylated (N-linked (GlcNAc...) asparagine).

Belongs to the peptidase S8 family.

The protein localises to the secreted. In terms of biological role, secreted subtilisin-like serine protease with keratinolytic activity that contributes to pathogenicity. This is Subtilisin-like protease 9 (SUB9) from Arthroderma benhamiae (strain ATCC MYA-4681 / CBS 112371) (Trichophyton mentagrophytes).